A 211-amino-acid chain; its full sequence is MSEPATTTPTPTPAGDHDAAATACKPAETTTALITCRSSSCSAQQQQQQQQQQEEPLGDDQLGELREIFRSFDRNGDGSLTQLELGSLLRSLGLKPSTDELDSLIQRADTNSNGLIEFSEFVALVAPELLYDRAPYSEDQIRRLFNIFDRDGNGFITAAELAHSMAKLGHALTVKELTGMIKEADTDGDGRISFQEFSRAITAAAFDNIFS.

Disordered regions lie at residues 1–22 (MSEPATTTPTPTPAGDHDAAAT) and 40–60 (SCSAQQQQQQQQQQEEPLGDD). A compositionally biased stretch (low complexity) spans 44–53 (QQQQQQQQQQ). 4 consecutive EF-hand domains span residues 60–95 (DQLGELREIFRSFDRNGDGSLTQLELGSLLRSLGLK), 96–131 (PSTDELDSLIQRADTNSNGLIEFSEFVALVAPELLY), 136–171 (YSEDQIRRLFNIFDRDGNGFITAAELAHSMAKLGHA), and 172–207 (LTVKELTGMIKEADTDGDGRISFQEFSRAITAAAFD). Ca(2+)-binding residues include Asp-73, Asn-75, Asp-77, Ser-79, Glu-84, Asp-109, Asn-111, Asn-113, Glu-120, Asp-149, Asp-151, Asn-153, Glu-160, Asp-185, Asp-187, Asp-189, Arg-191, and Glu-196.

Its function is as follows. Potential calcium sensor. This Oryza sativa subsp. japonica (Rice) protein is Probable calcium-binding protein CML11 (CML11).